The chain runs to 119 residues: Chorion class CA protein ERA.1 (119 aa).

A signal peptide spans 1 to 21 (MSTFAVLLLCVQACLIQNVYS). A left arm region spans residues 22–55 (QCLGRVGPGGPPLGPYGGPLGGPGYGPVGYGGCG). The segment at 56-103 (GYGGSGIGNVAVAGELPVAGSTGVMGQVPVIGAVEFAGPACAVGSVSI) is central domain. The interval 104-119 (SGACGPTCGCGGSPYY) is right arm.

The protein belongs to the chorion protein family.

This protein is one of many from the eggshell of the silk moth. In Bombyx mori (Silk moth), this protein is Chorion class CA protein ERA.1 (ERA.1).